The primary structure comprises 404 residues: Formate-dependent phosphoribosylglycinamide formyltransferase (404 aa).

N(1)-(5-phospho-beta-D-ribosyl)glycinamide is bound by residues 25 to 26 (EL) and E85. Residues R118, K159, 164 to 169 (SSGKGQ), 199 to 202 (EGFV), and E207 each bind ATP. One can recognise an ATP-grasp domain in the interval 123-318 (RLAAEELGLP…EFELHARAIL (196 aa)). Mg(2+) is bound by residues E277 and E289. N(1)-(5-phospho-beta-D-ribosyl)glycinamide-binding positions include D296, K365, and 372 to 373 (RR).

This sequence belongs to the PurK/PurT family. In terms of assembly, homodimer.

The enzyme catalyses N(1)-(5-phospho-beta-D-ribosyl)glycinamide + formate + ATP = N(2)-formyl-N(1)-(5-phospho-beta-D-ribosyl)glycinamide + ADP + phosphate + H(+). Its pathway is purine metabolism; IMP biosynthesis via de novo pathway; N(2)-formyl-N(1)-(5-phospho-D-ribosyl)glycinamide from N(1)-(5-phospho-D-ribosyl)glycinamide (formate route): step 1/1. Its function is as follows. Involved in the de novo purine biosynthesis. Catalyzes the transfer of formate to 5-phospho-ribosyl-glycinamide (GAR), producing 5-phospho-ribosyl-N-formylglycinamide (FGAR). Formate is provided by PurU via hydrolysis of 10-formyl-tetrahydrofolate. The protein is Formate-dependent phosphoribosylglycinamide formyltransferase of Burkholderia cenocepacia (strain HI2424).